Consider the following 235-residue polypeptide: Ubiquinone/menaquinone biosynthesis C-methyltransferase UbiE (235 aa).

Residues Thr60, Asp81, and Ser126 each contribute to the S-adenosyl-L-methionine site.

This sequence belongs to the class I-like SAM-binding methyltransferase superfamily. MenG/UbiE family.

The enzyme catalyses a 2-demethylmenaquinol + S-adenosyl-L-methionine = a menaquinol + S-adenosyl-L-homocysteine + H(+). It catalyses the reaction a 2-methoxy-6-(all-trans-polyprenyl)benzene-1,4-diol + S-adenosyl-L-methionine = a 5-methoxy-2-methyl-3-(all-trans-polyprenyl)benzene-1,4-diol + S-adenosyl-L-homocysteine + H(+). It participates in quinol/quinone metabolism; menaquinone biosynthesis; menaquinol from 1,4-dihydroxy-2-naphthoate: step 2/2. The protein operates within cofactor biosynthesis; ubiquinone biosynthesis. In terms of biological role, methyltransferase required for the conversion of demethylmenaquinol (DMKH2) to menaquinol (MKH2) and the conversion of 2-polyprenyl-6-methoxy-1,4-benzoquinol (DDMQH2) to 2-polyprenyl-3-methyl-6-methoxy-1,4-benzoquinol (DMQH2). This Geobacter sp. (strain M21) protein is Ubiquinone/menaquinone biosynthesis C-methyltransferase UbiE.